The following is a 74-amino-acid chain: ATP synthase subunit c (74 aa).

2 helical membrane passes run 5-25 (LAHIGAGLAAIGSGAAAIGVG) and 49-69 (LFIGIAFAEALGIFAFLVALL).

It belongs to the ATPase C chain family. As to quaternary structure, F-type ATPases have 2 components, F(1) - the catalytic core - and F(0) - the membrane proton channel. F(1) has five subunits: alpha(3), beta(3), gamma(1), delta(1), epsilon(1). F(0) has four main subunits: a(1), b(1), b'(1) and c(10-14). The alpha and beta chains form an alternating ring which encloses part of the gamma chain. F(1) is attached to F(0) by a central stalk formed by the gamma and epsilon chains, while a peripheral stalk is formed by the delta, b and b' chains.

Its subcellular location is the cell inner membrane. F(1)F(0) ATP synthase produces ATP from ADP in the presence of a proton or sodium gradient. F-type ATPases consist of two structural domains, F(1) containing the extramembraneous catalytic core and F(0) containing the membrane proton channel, linked together by a central stalk and a peripheral stalk. During catalysis, ATP synthesis in the catalytic domain of F(1) is coupled via a rotary mechanism of the central stalk subunits to proton translocation. In terms of biological role, key component of the F(0) channel; it plays a direct role in translocation across the membrane. A homomeric c-ring of between 10-14 subunits forms the central stalk rotor element with the F(1) delta and epsilon subunits. The protein is ATP synthase subunit c of Roseobacter denitrificans (strain ATCC 33942 / OCh 114) (Erythrobacter sp. (strain OCh 114)).